The sequence spans 507 residues: MPWLLSAPKLVPAVANVRGLSGCMLCSQRRYSLQPVPERRIPNRYLGQPSPFTHPHLLRPGEVTPGLSQVEYALRRHKLMSLIQKEAQGQSGTDQTVVVLSNPTYYMSNDIPYTFHQDNNFLYLCGFQEPDSILVLQSLPGKQLPSHKAILFVPRRDPSRELWDGPRSGTDGAIALTGVDEAYTLEEFQHLLPKMKAETNMVWYDWMRPSHAQLHSDYMQPLTEAKAKSKNKVRGVQQLIQRLRLIKSPAEIERMQIAGKLTSQAFIETMFTSKAPVEEAFLYAKFEFECRARGADILAYPPVVAGGNRSNTLHYVKNNQLIKDGEMVLLDGGCESSCYVSDITRTWPVNGRFTAPQAELYEAVLEIQRDCLALCFPGTSLENIYSMMLTLIGQKLKDLGIMKNIKENNAFKAARKYCPHHVGHYLGMDVHDTPDMPRSLPLQPGMVITIEPGIYIPEDDKDAPEKFRGLGVRIEDDVVVTQDSPLILSADCPKEMNDIEQICSQAS.

The N-terminal 31 residues, 1-31 (MPWLLSAPKLVPAVANVRGLSGCMLCSQRRY), are a transit peptide targeting the mitochondrion. An interaction with TNFRSF1B region spans residues 54–79 (HPHLLRPGEVTPGLSQVEYALRRHKL). Substrate contacts are provided by tyrosine 300, aspartate 331, aspartate 342, histidine 424, histidine 431, glutamate 451, and glutamate 475. Mn(2+) contacts are provided by aspartate 331, aspartate 342, and histidine 424. Residues glutamate 451 and glutamate 475 each coordinate Mn(2+).

Belongs to the peptidase M24B family. Homodimer. Isoform 1 interacts with TNFRSF1B/TNFR2 (activated) and TRAF2. It depends on Mn(2+) as a cofactor. In terms of tissue distribution, isoform 1 and isoform 2 are widely expressed, with isoform 1 being more abundant.

It is found in the mitochondrion. Its subcellular location is the cytoplasm. The enzyme catalyses Release of any N-terminal amino acid, including proline, that is linked to proline, even from a dipeptide or tripeptide.. Catalyzes the removal of a penultimate prolyl residue from the N-termini of peptides, such as Leu-Pro-Ala. Also shows low activity towards peptides with Ala or Ser at the P1 position. Its function is as follows. Promotes TNFRSF1B-mediated phosphorylation of MAPK8/JNK1 and MAPK9/JNK2, suggesting a function as an adapter protein for TNFRSF1B; the effect is independent of XPNPEP3 peptidase activity. May inhibit apoptotic cell death induced via TNF-TNFRSF1B signaling. This chain is Xaa-Pro aminopeptidase 3 (XPNPEP3), found in Homo sapiens (Human).